The following is a 473-amino-acid chain: Lactate utilization protein B (473 aa).

2 4Fe-4S ferredoxin-type domains span residues 303-333 (GTAF…GHSY) and 352-381 (YDDY…LHEL). [4Fe-4S] cluster is bound by residues C312, C315, C318, C322, C365, C368, and C372.

This sequence belongs to the LutB/YkgF family.

Functionally, is involved in L-lactate degradation and allows cells to grow with lactate as the sole carbon source. Has probably a role as an electron transporter during oxidation of L-lactate. This Bacillus pumilus (strain SAFR-032) protein is Lactate utilization protein B.